The chain runs to 228 residues: 7-cyano-7-deazaguanine synthase (228 aa).

Residue 16–26 (FSGGQDSTTCL) participates in ATP binding. Zn(2+) contacts are provided by C193, C201, C204, and C207.

Belongs to the QueC family. It depends on Zn(2+) as a cofactor.

It carries out the reaction 7-carboxy-7-deazaguanine + NH4(+) + ATP = 7-cyano-7-deazaguanine + ADP + phosphate + H2O + H(+). It functions in the pathway purine metabolism; 7-cyano-7-deazaguanine biosynthesis. Catalyzes the ATP-dependent conversion of 7-carboxy-7-deazaguanine (CDG) to 7-cyano-7-deazaguanine (preQ(0)). This Pasteurella multocida (strain Pm70) protein is 7-cyano-7-deazaguanine synthase.